Consider the following 526-residue polypeptide: Cytochrome P450 monooxygenase BOT4 (526 aa).

The N-linked (GlcNAc...) asparagine glycan is linked to asparagine 5. A helical membrane pass occupies residues 41–61 (CLVAIILCRFIAVWSYNLWFH). 2 N-linked (GlcNAc...) asparagine glycosylation sites follow: asparagine 205 and asparagine 281. Cysteine 464 serves as a coordination point for heme.

This sequence belongs to the cytochrome P450 family. Heme is required as a cofactor.

Its subcellular location is the membrane. Its pathway is secondary metabolite biosynthesis. Cytochrome P450 monooxygenase; part of the gene cluster that mediates the biosynthesis of botrydial. Botrydial is necessary for colonization of plant tissue by the T4 strain. It is a strain-dependent virulence factor since highly aggressive strains like SAS56 or B05 still retain substantial virulence when botrydial synthesis is impaired, since they produce also botcinic acid. The first step of botrydial biosynthesis is performed by the sesquiterpene synthase BOT2 which catalyzes the cyclization of farnesyl diphosphate (FPP) to presilphiperfolan-8-beta-ol (PSP). The cytochrome P450 monooxygenase BOT4 then catalyzes the hydroxylation at C-4 to give a probotryane intermediate. Acetylation of the hydroxyl at C-4 is carried out by the acetyltransferase BOT5, followed by the combined action of the P450 monooxygenases BOT3 and BOT1, to yield finally the glycol, via the regio- and stereospecific hydroxylations at C-10 and C-15 of the probotryane intermediates, respectively. The cleavage of the C10-C15 bond of probotryane skeleton is an intriguing and chemically important reaction, which could be mediated by some of the monooxygenases or by a combination of them. It is possible that either BOT3 or BOT1 would oxidize either the 10- or the 15-hydroxy group to the hydroperoxide derivative, which would then undergo heterolytic fragmentation to give the dialdehyde botrydial. Finally, the dehydrogenase BOT7 might be involved in the conversion of botrydial to dihydrobotrydial. In Botryotinia fuckeliana (Noble rot fungus), this protein is Cytochrome P450 monooxygenase BOT4.